Here is a 243-residue protein sequence, read N- to C-terminus: Phosphoribosyl isomerase A (243 aa).

D10 serves as the catalytic Proton acceptor. Residue D129 is the Proton donor of the active site.

The protein belongs to the HisA/HisF family.

The protein resides in the cytoplasm. The catalysed reaction is 1-(5-phospho-beta-D-ribosyl)-5-[(5-phospho-beta-D-ribosylamino)methylideneamino]imidazole-4-carboxamide = 5-[(5-phospho-1-deoxy-D-ribulos-1-ylimino)methylamino]-1-(5-phospho-beta-D-ribosyl)imidazole-4-carboxamide. It catalyses the reaction N-(5-phospho-beta-D-ribosyl)anthranilate = 1-(2-carboxyphenylamino)-1-deoxy-D-ribulose 5-phosphate. Its pathway is amino-acid biosynthesis; L-histidine biosynthesis; L-histidine from 5-phospho-alpha-D-ribose 1-diphosphate: step 4/9. It functions in the pathway amino-acid biosynthesis; L-tryptophan biosynthesis; L-tryptophan from chorismate: step 3/5. In terms of biological role, involved in both the histidine and tryptophan biosynthetic pathways. This Mycobacteroides abscessus (strain ATCC 19977 / DSM 44196 / CCUG 20993 / CIP 104536 / JCM 13569 / NCTC 13031 / TMC 1543 / L948) (Mycobacterium abscessus) protein is Phosphoribosyl isomerase A.